The following is a 188-amino-acid chain: Ribosome-recycling factor (188 aa).

Belongs to the RRF family.

It is found in the cytoplasm. In terms of biological role, responsible for the release of ribosomes from messenger RNA at the termination of protein biosynthesis. May increase the efficiency of translation by recycling ribosomes from one round of translation to another. This chain is Ribosome-recycling factor, found in Cereibacter sphaeroides (strain ATCC 17025 / ATH 2.4.3) (Rhodobacter sphaeroides).